The following is a 122-amino-acid chain: Large ribosomal subunit protein uL14 (122 aa).

It belongs to the universal ribosomal protein uL14 family. Part of the 50S ribosomal subunit. Forms a cluster with proteins L3 and L19. In the 70S ribosome, L14 and L19 interact and together make contacts with the 16S rRNA in bridges B5 and B8.

Binds to 23S rRNA. Forms part of two intersubunit bridges in the 70S ribosome. This chain is Large ribosomal subunit protein uL14, found in Shewanella sp. (strain ANA-3).